The chain runs to 316 residues: MTRHLLTAADLSRDEATAILDDADRFSQALLGREVKKLPTLRGRTVITMFYENSTRTRVSFEVAGKWMSADVINVSASGSSVAKGESLRDTALTLRAAGADALIIRHPASGAAQQLAEWTAAEAGAPSVINAGDGTHEHPTQALLDALTLRQRLGGIEGRRVVIVGDVLHSRVARSNVLLLHTLGAEVVLVAPPTLLPVGVRQWPVTVSHDLDAELPAADAVLMLRVQAERMNGGFFPSAREYSVRYGLSDKRQALLPDSAVVLHPGPMLRGMEISSSVADSSQSAVLQQVSNGVHVRMAVLFHLLVGAEQEAISA.

Residues R56 and T57 each contribute to the carbamoyl phosphate site. K84 lines the L-aspartate pocket. Residues R106, H139, and Q142 each contribute to the carbamoyl phosphate site. The L-aspartate site is built by R172 and R226. Residues G267 and P268 each contribute to the carbamoyl phosphate site.

It belongs to the aspartate/ornithine carbamoyltransferase superfamily. ATCase family. As to quaternary structure, heterododecamer (2C3:3R2) of six catalytic PyrB chains organized as two trimers (C3), and six regulatory PyrI chains organized as three dimers (R2).

It catalyses the reaction carbamoyl phosphate + L-aspartate = N-carbamoyl-L-aspartate + phosphate + H(+). It functions in the pathway pyrimidine metabolism; UMP biosynthesis via de novo pathway; (S)-dihydroorotate from bicarbonate: step 2/3. Functionally, catalyzes the condensation of carbamoyl phosphate and aspartate to form carbamoyl aspartate and inorganic phosphate, the committed step in the de novo pyrimidine nucleotide biosynthesis pathway. The protein is Aspartate carbamoyltransferase catalytic subunit of Mycobacterium sp. (strain JLS).